The sequence spans 88 residues: Small ribosomal subunit protein bS16c (88 aa).

The protein belongs to the bacterial ribosomal protein bS16 family.

The protein localises to the plastid. The protein resides in the chloroplast. The polypeptide is Small ribosomal subunit protein bS16c (Coffea arabica (Arabian coffee)).